We begin with the raw amino-acid sequence, 664 residues long: DNA ligase (664 aa).

Residues 32-36 (DKEYD) and 80-81 (SL) contribute to the NAD(+) site. Lys-122 functions as the N6-AMP-lysine intermediate in the catalytic mechanism. Residues Arg-144, Glu-178, and Lys-314 each coordinate NAD(+). Zn(2+)-binding residues include Cys-407, Cys-410, Cys-423, and Cys-429. In terms of domain architecture, BRCT spans 587–664 (IDENPFMDKT…NEEEFSNKIK (78 aa)).

The protein belongs to the NAD-dependent DNA ligase family. LigA subfamily. It depends on Mg(2+) as a cofactor. The cofactor is Mn(2+).

The enzyme catalyses NAD(+) + (deoxyribonucleotide)n-3'-hydroxyl + 5'-phospho-(deoxyribonucleotide)m = (deoxyribonucleotide)n+m + AMP + beta-nicotinamide D-nucleotide.. In terms of biological role, DNA ligase that catalyzes the formation of phosphodiester linkages between 5'-phosphoryl and 3'-hydroxyl groups in double-stranded DNA using NAD as a coenzyme and as the energy source for the reaction. It is essential for DNA replication and repair of damaged DNA. The sequence is that of DNA ligase from Clostridium botulinum (strain Langeland / NCTC 10281 / Type F).